A 269-amino-acid chain; its full sequence is MTVPAFTVVIPARLASTRLPDKPLADIGGRPMIVRVAERAHASSAQRTVVATDAPAVAQACAAHGIEAVLTRADHPSGTDRLSEVAAQLGLADDAIVVNVQGDEPLIEPSLIDEVALHLAHHADCAIATAAHPLQDIAEVFNPNVVKVVCDAAGRALYFSRAPIPWARDAWSGVPAVPAALAQVPLPGMPVLRHIGLYAYRAGFLRRFPTLAAAPLEQTEALEQLRAMWHGERIAVLQTSAAPAPGVDTPADLERVRALWAQSMAQEGP.

The protein belongs to the KdsB family.

Its subcellular location is the cytoplasm. It catalyses the reaction 3-deoxy-alpha-D-manno-oct-2-ulosonate + CTP = CMP-3-deoxy-beta-D-manno-octulosonate + diphosphate. Its pathway is nucleotide-sugar biosynthesis; CMP-3-deoxy-D-manno-octulosonate biosynthesis; CMP-3-deoxy-D-manno-octulosonate from 3-deoxy-D-manno-octulosonate and CTP: step 1/1. It participates in bacterial outer membrane biogenesis; lipopolysaccharide biosynthesis. Activates KDO (a required 8-carbon sugar) for incorporation into bacterial lipopolysaccharide in Gram-negative bacteria. The polypeptide is 3-deoxy-manno-octulosonate cytidylyltransferase (Cupriavidus necator (strain ATCC 17699 / DSM 428 / KCTC 22496 / NCIMB 10442 / H16 / Stanier 337) (Ralstonia eutropha)).